The primary structure comprises 194 residues: ATP-dependent Clp protease proteolytic subunit (194 aa).

Ser-99 (nucleophile) is an active-site residue. Residue His-124 is part of the active site.

The protein belongs to the peptidase S14 family. As to quaternary structure, fourteen ClpP subunits assemble into 2 heptameric rings which stack back to back to give a disk-like structure with a central cavity, resembling the structure of eukaryotic proteasomes.

Its subcellular location is the cytoplasm. It carries out the reaction Hydrolysis of proteins to small peptides in the presence of ATP and magnesium. alpha-casein is the usual test substrate. In the absence of ATP, only oligopeptides shorter than five residues are hydrolyzed (such as succinyl-Leu-Tyr-|-NHMec, and Leu-Tyr-Leu-|-Tyr-Trp, in which cleavage of the -Tyr-|-Leu- and -Tyr-|-Trp bonds also occurs).. In terms of biological role, cleaves peptides in various proteins in a process that requires ATP hydrolysis. Has a chymotrypsin-like activity. Plays a major role in the degradation of misfolded proteins. The protein is ATP-dependent Clp protease proteolytic subunit of Clostridium perfringens (strain ATCC 13124 / DSM 756 / JCM 1290 / NCIMB 6125 / NCTC 8237 / Type A).